Reading from the N-terminus, the 288-residue chain is Homoserine kinase (288 aa).

Residue 78 to 88 (PLARGLGSSSS) participates in ATP binding.

The protein belongs to the GHMP kinase family. Homoserine kinase subfamily.

The protein resides in the cytoplasm. It carries out the reaction L-homoserine + ATP = O-phospho-L-homoserine + ADP + H(+). The protein operates within amino-acid biosynthesis; L-threonine biosynthesis; L-threonine from L-aspartate: step 4/5. Its function is as follows. Catalyzes the ATP-dependent phosphorylation of L-homoserine to L-homoserine phosphate. The protein is Homoserine kinase of Streptococcus agalactiae serotype V (strain ATCC BAA-611 / 2603 V/R).